We begin with the raw amino-acid sequence, 168 residues long: Lipid transfer protein EARLI 1 (168 aa).

The N-terminal stretch at Met-1–Ala-25 is a signal peptide. The tract at residues Pro-32–Ser-81 is disordered. The stretch at Pro-34–Ser-41 is one A-1 repeat. The 3 X 8 AA repeats A of P-K-[HP]-K-P-V-P-S stretch occupies residues Pro-34–Ser-57. A compositionally biased stretch (pro residues) spans Val-39–Thr-78. Residues Pro-42–Ser-49 form an A-2 repeat. One copy of the A-3 repeat lies at Pro-50–Ser-57. Residues Pro-58–Ser-62 form a B-1 repeat. The interval Pro-58–Ser-67 is 2 X 58 AA tandem repeats B of P-S-V-P-S. One copy of the B-2 repeat lies at Pro-63–Ser-67.

This sequence belongs to the plant LTP family. PEARLI1 subfamily. In terms of tissue distribution, mostly expressed in aerial part of seedlings, and, to a lower extent, in roots. Higher basal levels in early-flowering ecotypes.

It localises to the secreted. It is found in the cell wall. Probable lipid transfer protein (LTP). May improve freezing survival. Seems to control the flowering process and lignin synthesis. Has an auxiliary role for germinability and early seedling development under low temperature and salt stress conditions, probably in an abscisic acid- (ABA) dependent manner. Confers resistance to Botrytis cinerea and exhibits anti-fungal activity, at least against S.cerevisiae, B.cinerea and Fusarium oxysporum, probably by increasing their membrane permeability. The chain is Lipid transfer protein EARLI 1 (EARLI1) from Arabidopsis thaliana (Mouse-ear cress).